The sequence spans 652 residues: DNA ligase (652 aa).

Residues 29 to 33, 78 to 79, and Glu107 contribute to the NAD(+) site; these read DSEYD and SL. The N6-AMP-lysine intermediate role is filled by Lys109. Positions 130, 164, 278, and 302 each coordinate NAD(+). Cys395, Cys398, Cys413, and Cys418 together coordinate Zn(2+). The 76-residue stretch at 577-652 folds into the BRCT domain; it reads VADAALSGLT…VRDEAWLESL (76 aa).

This sequence belongs to the NAD-dependent DNA ligase family. LigA subfamily. Mg(2+) is required as a cofactor. It depends on Mn(2+) as a cofactor.

It catalyses the reaction NAD(+) + (deoxyribonucleotide)n-3'-hydroxyl + 5'-phospho-(deoxyribonucleotide)m = (deoxyribonucleotide)n+m + AMP + beta-nicotinamide D-nucleotide.. Functionally, DNA ligase that catalyzes the formation of phosphodiester linkages between 5'-phosphoryl and 3'-hydroxyl groups in double-stranded DNA using NAD as a coenzyme and as the energy source for the reaction. It is essential for DNA replication and repair of damaged DNA. This is DNA ligase from Streptococcus pneumoniae (strain Taiwan19F-14).